The following is a 262-amino-acid chain: Phosphatidylserine decarboxylase proenzyme (262 aa).

Active-site charge relay system; for autoendoproteolytic cleavage activity residues include D86, H142, and S226. Catalysis depends on S226, which acts as the Schiff-base intermediate with substrate; via pyruvic acid; for decarboxylase activity. S226 carries the post-translational modification Pyruvic acid (Ser); by autocatalysis.

The protein belongs to the phosphatidylserine decarboxylase family. PSD-B subfamily. Prokaryotic type I sub-subfamily. As to quaternary structure, heterodimer of a large membrane-associated beta subunit and a small pyruvoyl-containing alpha subunit. The cofactor is pyruvate. In terms of processing, is synthesized initially as an inactive proenzyme. Formation of the active enzyme involves a self-maturation process in which the active site pyruvoyl group is generated from an internal serine residue via an autocatalytic post-translational modification. Two non-identical subunits are generated from the proenzyme in this reaction, and the pyruvate is formed at the N-terminus of the alpha chain, which is derived from the carboxyl end of the proenzyme. The autoendoproteolytic cleavage occurs by a canonical serine protease mechanism, in which the side chain hydroxyl group of the serine supplies its oxygen atom to form the C-terminus of the beta chain, while the remainder of the serine residue undergoes an oxidative deamination to produce ammonia and the pyruvoyl prosthetic group on the alpha chain. During this reaction, the Ser that is part of the protease active site of the proenzyme becomes the pyruvoyl prosthetic group, which constitutes an essential element of the active site of the mature decarboxylase.

It is found in the cell membrane. The enzyme catalyses a 1,2-diacyl-sn-glycero-3-phospho-L-serine + H(+) = a 1,2-diacyl-sn-glycero-3-phosphoethanolamine + CO2. It participates in phospholipid metabolism; phosphatidylethanolamine biosynthesis; phosphatidylethanolamine from CDP-diacylglycerol: step 2/2. Its function is as follows. Catalyzes the formation of phosphatidylethanolamine (PtdEtn) from phosphatidylserine (PtdSer). This Bacillus cereus (strain AH820) protein is Phosphatidylserine decarboxylase proenzyme.